A 454-amino-acid chain; its full sequence is Epsin-1 (454 aa).

The ENTH domain occupies 11–143 (NLVKGYSSTQ…SDDERLNEER (133 aa)). Disordered stretches follow at residues 142 to 195 (ERNM…EDYE) and 292 to 350 (YLAS…GNQS). Residues 149–160 (GRNRKGRRRRGT) show a composition bias toward basic residues. The residue at position 160 (Thr160) is a Phosphothreonine. A Phosphoserine modification is found at Ser163. UIM domains follow at residues 165 to 184 (ENDD…AEED) and 189 to 208 (KQDE…EELK). Thr180 carries the phosphothreonine modification. Positions 180–191 (TAEEDERRRKQD) are enriched in basic and acidic residues. The span at 292 to 302 (YLASMQQQQQA) shows a compositional bias: low complexity. Composition is skewed to polar residues over residues 303 to 329 (MSNN…ASSP) and 340 to 350 (PLIQNRTGNQS). A Phosphoserine modification is found at Ser328. Lys357 participates in a covalent cross-link: Glycyl lysine isopeptide (Lys-Gly) (interchain with G-Cter in ubiquitin). A phosphothreonine mark is found at Thr364, Thr366, Thr384, Thr386, and Thr388. The segment covering 384 to 398 (TKTGTFINSQGTGYR) has biased composition (polar residues). A disordered region spans residues 384-405 (TKTGTFINSQGTGYRQVSDDPN). Phosphothreonine; by PRK1 occurs at positions 395 and 415. A compositionally biased stretch (polar residues) spans 418–428 (PSTSVVPTQTG). Residues 418 to 454 (PSTSVVPTQTGYGFGNQSQQQSQNNGSNNRGYTLIDL) are disordered. Positions 432 to 446 (GNQSQQQSQNNGSNN) are enriched in low complexity. Positions 447–454 (RGYTLIDL) are clathrin-binding.

It belongs to the epsin family. In terms of assembly, interacts with EDE1 and PAN1.

It is found in the cytoplasm. The protein resides in the membrane. Binds to membranes enriched in phosphatidylinositol 3,5-bisphosphate (PtdIns(3,5)P2) and phosphatidylinositol 4,5-bisphosphate (PtdIns(4,5)P2). Required for endocytosis and localization of actin. Negatively regulated via phosphorylation. The protein is Epsin-1 (ENT1) of Saccharomyces cerevisiae (strain ATCC 204508 / S288c) (Baker's yeast).